The primary structure comprises 65 residues: Large ribosomal subunit protein uL29 (65 aa).

This sequence belongs to the universal ribosomal protein uL29 family.

The polypeptide is Large ribosomal subunit protein uL29 (Desulforapulum autotrophicum (strain ATCC 43914 / DSM 3382 / VKM B-1955 / HRM2) (Desulfobacterium autotrophicum)).